The chain runs to 74 residues: UPF0435 protein BcerKBAB4_0386 (74 aa).

It belongs to the UPF0435 family.

The polypeptide is UPF0435 protein BcerKBAB4_0386 (Bacillus mycoides (strain KBAB4) (Bacillus weihenstephanensis)).